A 212-amino-acid polypeptide reads, in one-letter code: Endonuclease III (212 aa).

The region spanning 108–127 is the HhH domain; sequence FKELVKLPGVGRKTANVVLN. Residues C187, C194, C197, and C203 each coordinate [4Fe-4S] cluster.

It belongs to the Nth/MutY family. The cofactor is [4Fe-4S] cluster.

It carries out the reaction 2'-deoxyribonucleotide-(2'-deoxyribose 5'-phosphate)-2'-deoxyribonucleotide-DNA = a 3'-end 2'-deoxyribonucleotide-(2,3-dehydro-2,3-deoxyribose 5'-phosphate)-DNA + a 5'-end 5'-phospho-2'-deoxyribonucleoside-DNA + H(+). In terms of biological role, DNA repair enzyme that has both DNA N-glycosylase activity and AP-lyase activity. The DNA N-glycosylase activity releases various damaged pyrimidines from DNA by cleaving the N-glycosidic bond, leaving an AP (apurinic/apyrimidinic) site. The AP-lyase activity cleaves the phosphodiester bond 3' to the AP site by a beta-elimination, leaving a 3'-terminal unsaturated sugar and a product with a terminal 5'-phosphate. This chain is Endonuclease III, found in Rickettsia prowazekii (strain Madrid E).